A 629-amino-acid polypeptide reads, in one-letter code: Phosphoglucomutase, chloroplastic (629 aa).

The transit peptide at 1–69 (MSSTYARFDT…SSSSGPIIAG (69 aa)) directs the protein to the chloroplast. Residues arginine 94 and serine 187 each coordinate alpha-D-glucose 1,6-bisphosphate. Serine 187 acts as the Phosphoserine intermediate in catalysis. Positions 187, 352, 354, and 356 each coordinate Mg(2+). Residue serine 187 is modified to Phosphoserine. Alpha-D-glucose 1,6-bisphosphate-binding residues include aspartate 356, arginine 357, threonine 420, glutamate 439, serine 441, and lysine 452.

The protein belongs to the phosphohexose mutase family. Monomer. The cofactor is Mg(2+).

The protein localises to the plastid. It is found in the chloroplast. It carries out the reaction alpha-D-glucose 1-phosphate = alpha-D-glucose 6-phosphate. The enzyme catalyses O-phospho-L-seryl-[protein] + alpha-D-glucose 1-phosphate = alpha-D-glucose 1,6-bisphosphate + L-seryl-[protein]. The catalysed reaction is alpha-D-glucose 1,6-bisphosphate + L-seryl-[protein] = O-phospho-L-seryl-[protein] + alpha-D-glucose 6-phosphate. Inhibited by the Calvin cycle intermediates fructose-1,6-bisphosphate and ribulose-1,5-bisphosphate. Its function is as follows. Catalyzes the reversible isomerization of alpha-D-glucose 1-phosphate to alpha-D-glucose 6-phosphate. The mechanism proceeds via the intermediate compound alpha-D-glucose 1,6-bisphosphate. This enzyme participates in both the breakdown and synthesis of glucose. The chain is Phosphoglucomutase, chloroplastic (PGMP) from Brassica napus (Rape).